The following is a 420-amino-acid chain: MIOREX complex component 9 (420 aa).

Helical transmembrane passes span 125-145 (VYKV…TFIL) and 149-169 (IVVI…FFFF).

As to quaternary structure, associates with the mitochondrial ribosome.

The protein localises to the mitochondrion. The protein resides in the mitochondrion membrane. Functionally, component of MIOREX complexes, large expressome-like assemblies of ribosomes with factors involved in all the steps of post-transcriptional gene expression. This is MIOREX complex component 9 from Saccharomyces cerevisiae (strain ATCC 204508 / S288c) (Baker's yeast).